Here is a 231-residue protein sequence, read N- to C-terminus: Large ribosomal subunit protein uL1 (231 aa).

This sequence belongs to the universal ribosomal protein uL1 family. In terms of assembly, part of the 50S ribosomal subunit.

In terms of biological role, binds directly to 23S rRNA. The L1 stalk is quite mobile in the ribosome, and is involved in E site tRNA release. Its function is as follows. Protein L1 is also a translational repressor protein, it controls the translation of the L11 operon by binding to its mRNA. This chain is Large ribosomal subunit protein uL1, found in Gluconacetobacter diazotrophicus (strain ATCC 49037 / DSM 5601 / CCUG 37298 / CIP 103539 / LMG 7603 / PAl5).